Reading from the N-terminus, the 583-residue chain is Sensor protein SrrB (583 aa).

Topologically, residues 1 to 11 are cytoplasmic; sequence MMSRLNSVVIK. The helical transmembrane segment at 12-32 threads the bilayer; it reads LWLTIILIVTTVLILLSIALI. The Extracellular segment spans residues 33–174; sequence TFMQYYFTQE…SIEDTNNAIT (142 aa). The helical transmembrane segment at 175–195 threads the bilayer; the sequence is IITIITAVIFLTITTVFAFFL. At 196–583 the chain is on the cytoplasmic side; sequence SSRITKPLRR…TFIIKLPKPE (388 aa). The HAMP domain occupies 197–249; the sequence is SRITKPLRRLRDQATRVSEGDYSYKPSVTTKDEIGQLSQAFNQMSTEIEEHVD. In terms of domain architecture, Histidine kinase spans 366 to 583; sequence NVSHELRTPI…TFIIKLPKPE (218 aa). His-369 carries the phosphohistidine; by autocatalysis modification.

The protein localises to the cell membrane. The enzyme catalyses ATP + protein L-histidine = ADP + protein N-phospho-L-histidine.. Functionally, member of the two-component regulatory system SrrA/SrrB, which is involved in the global regulation of staphylococcal virulence factors in response to environmental oxygen levels as well as biofilm formation. Also plays an essential role in host-derived nitric oxide resistance by regulating hmp/flavohemoglobin, an enzyme that detoxifies nitric oxide by converting it to nitrate. Functions as a sensor protein kinase which is autophosphorylated at a histidine residue and transfers its phosphate group to SrrA. In turn, SrrA binds to the upstream promoter regions of the target genes to positively and negatively regulate their expression. This Staphylococcus aureus (strain MW2) protein is Sensor protein SrrB (srrB).